The chain runs to 561 residues: Arginine--tRNA ligase (561 aa).

Residues 129-139 (ANPTGPLHIGH) carry the 'HIGH' region motif.

Belongs to the class-I aminoacyl-tRNA synthetase family. In terms of assembly, monomer.

The protein localises to the cytoplasm. The catalysed reaction is tRNA(Arg) + L-arginine + ATP = L-arginyl-tRNA(Arg) + AMP + diphosphate. The polypeptide is Arginine--tRNA ligase (Geotalea daltonii (strain DSM 22248 / JCM 15807 / FRC-32) (Geobacter daltonii)).